The sequence spans 904 residues: Toll-like receptor 3 (904 aa).

Residues 1 to 26 (MSRPLPYHIYFFTGLLTCWILCTSSA) form the signal peptide. The LRRNT domain maps to 27–52 (HKCTVRHEVADCSHLKLTQIPEDLPT). At 27–705 (HKCTVRHEVA…PCKDSAPFEL (679 aa)) the chain is on the lumenal side. Cysteines 29 and 38 form a disulfide. N53, N58, and N71 each carry an N-linked (GlcNAc...) asparagine glycan. LRR repeat units follow at residues 53–74 (NITV…NFTR), 77–98 (RLTI…LCQN), 101–122 (WLEI…TFVF), 125–146 (NLTE…PFKN), 149–170 (NLIK…TQLQ), and 173–196 (NLQE…DFLG). Residues C96 and C123 are joined by a disulfide bond. N125 carries N-linked (GlcNAc...) asparagine glycosylation. N-linked (GlcNAc...) asparagine glycosylation is present at N197. LRR repeat units follow at residues 199-220 (SLER…CFHA) and 223-245 (KLSG…LCLE). N-linked (GlcNAc...) asparagine glycosylation is found at N248, N253, N276, and N292. LRR repeat units follow at residues 250–271 (SIEN…TFSG), 276–297 (NLTT…SFAW), 300–321 (HLEY…SFYG), 324–345 (NLRH…TSLP), 357–378 (CLEY…TFTG), 381–401 (RLKF…TNET), 409–430 (PLLL…AFSW), 433–455 (HLEV…EWRG), 466–487 (YNKY…QRLM), 508–529 (NLVI…LLKG), 532–553 (KLEI…ANPG), 564–585 (HLRI…AFKD), 588–609 (ELKS…VFDN), and 612–633 (SLKS…VFGP). N-linked (GlcNAc...) asparagine glycans are attached at residues N399 and N414. 3 N-linked (GlcNAc...) asparagine glycosylation sites follow: N637, N663, and N668. In terms of domain architecture, LRRCT spans 646–699 (NPFDCTCESIAWFVNWINSTHTNISELSNHYLCNTPPQYHGFPVMLFDVSPCKD). 2 disulfide bridges follow: C650–C678 and C652–C697. A helical transmembrane segment spans residues 706 to 726 (LFMINTNILLIFIFIVLLIHF). Residues 727 to 904 (EGWRISFYWN…VALGSRNSAH (178 aa)) lie on the Cytoplasmic side of the membrane. The TIR domain maps to 754–897 (FEYAAYIIHA…AFHHKLKVAL (144 aa)). Y759 carries the post-translational modification Phosphotyrosine. Residues K812 and K831 each participate in a glycyl lysine isopeptide (Lys-Gly) (interchain with G-Cter in ubiquitin) cross-link. Y858 is subject to Phosphotyrosine.

It belongs to the Toll-like receptor family. As to quaternary structure, monomer and homodimer; dimerization is triggered by ligand-binding and is required for TLR3 signaling. Interacts (via transmembrane domain) with UNC93B1. Interacts with TICAM1 (via the TIR domain) in response to poly(I:C) and this interaction is enhanced the presence of WDFY1. Interacts with SRC; upon binding of double-stranded RNA. The tyrosine-phosphorylated form (via TIR domain) interacts with WDFY1 (via WD repeat 2) in response to poly(I:C). Post-translationally, ubiquitinated by TRIM3; leading to recognition and sorting of polyubiquitinated TLR3 by the ESCRT complexes. Ubiquitinated by ZNRF1 via 'Lys-63'-linked ubiquitin chains; leading to TLR3 lysosomal trafficking and degradation.

It is found in the endoplasmic reticulum membrane. The protein resides in the endosome membrane. It localises to the early endosome. Key component of innate and adaptive immunity. TLRs (Toll-like receptors) control host immune response against pathogens through recognition of molecular patterns specific to microorganisms. TLR3 is a nucleotide-sensing TLR which is activated by double-stranded RNA, a sign of viral infection. Acts via the adapter TRIF/TICAM1, leading to NF-kappa-B activation, cytokine secretion and the inflammatory response. The sequence is that of Toll-like receptor 3 (TLR3) from Boselaphus tragocamelus (Nilgai).